A 242-amino-acid chain; its full sequence is Ribosomal RNA small subunit methyltransferase G (242 aa).

S-adenosyl-L-methionine is bound by residues G81, F86, 104–106, 132–133, and R151; these read DST and AE.

It belongs to the methyltransferase superfamily. RNA methyltransferase RsmG family.

Its subcellular location is the cytoplasm. In terms of biological role, specifically methylates the N7 position of a guanine in 16S rRNA. This is Ribosomal RNA small subunit methyltransferase G from Synechococcus elongatus (strain ATCC 33912 / PCC 7942 / FACHB-805) (Anacystis nidulans R2).